The chain runs to 99 residues: MGRFVVWPCELDSRLSRKYGRIIPKNLAIEKPSLDEIIEVAETLNLKIVEVDREKLNPRLSGIDEELRTYGRIIIESPYGKVKTLRLIAQKIREFRRRR.

The protein belongs to the SRP19 family. As to quaternary structure, part of the signal recognition particle protein translocation system, which is composed of SRP and FtsY. Archaeal SRP consists of a 7S RNA molecule of 300 nucleotides and two protein subunits: SRP54 and SRP19.

The protein localises to the cytoplasm. Involved in targeting and insertion of nascent membrane proteins into the cytoplasmic membrane. Binds directly to 7S RNA and mediates binding of the 54 kDa subunit of the SRP. The polypeptide is Signal recognition particle 19 kDa protein (Pyrococcus horikoshii (strain ATCC 700860 / DSM 12428 / JCM 9974 / NBRC 100139 / OT-3)).